The chain runs to 773 residues: MKLLEIYDKQLVEQEEGGFRAILTRYLNKWIFTVDHKLIGTMYITFSIFAGIIGTLLSLVIPMELSTGNMLEGDSQQYNVIVTAHGLIMIFFVVMYCSMPAMLGGFANWFLPIMVGAPDVAFPRLNNISLWLIVVSFGLLLTSSCVGIGAGTGWTVYPPLSMMEYHPGHAVDVGILSLHIAGASSLVGAINFLTTVFNMKIAGLSWPKVSLFVWSVVITAVLLVLSLPVLAGGLTMLITDRNFETTFFDPIGGGDPILYQHLFHPEVYILILPGFGIISIIISRYSNKGIFGVKGMISAMSAIGFLGFLVWAYHHMYTVGLDVDTRAYFTAATMIIAIPTGIKIFSWLATLWGGVIKITTPMLFVIGFLVLFTIGGLTGVVLANGGLDISLHDTYYVVAHFHYVLSMGAIFAIFAGYYYYYAIMNSNRILGIVRYNEQLGRIHFWTMFIGVNVTFFPMHFLGLAGMPRRIGDYPDAYIGWNLIASYGSLITAFGLLFFFVNIFTPYFKKKALISKKFQRGAMILMGLDFSRDWQIGFQDPATPIMEGIIDLHNYIFFYLIVVAVFIGWVMGRILWRFAYKWSYPTIGDIEIFKNFTAYNQIIHGTVIEIVWTLIPTVILYLIAIPSFTLLYAMDEIINPTVTIKIIGHQWYWSYEYGDNSSNLVEFDSYMVYERDLNEGQLRLLEVDNSMIVPVKTHIRLIITSGDVLHSWAVPSFGIKVDAVPGRLNQIGLYVKREGTFYGQCSELCGVDHGFMPIKVEAVKVQEYLGRLYK.

Residues 1–491 (MKLLEIYDKQ…LIASYGSLIT (491 aa)) are COX1. A helical membrane pass occupies residues 41-61 (TMYITFSIFAGIIGTLLSLVI). Residue Glu64 participates in Ca(2+) binding. His85 contacts Fe(II)-heme a. Transmembrane regions (helical) follow at residues 87–111 (LIMIFFVVMYCSMPAMLGGFANWFL), 130–150 (LWLIVVSFGLLLTSSCVGIGA), 173–193 (VGILSLHIAGASSLVGAINFL), 211–231 (LFVWSVVITAVLLVLSLPVLA), 262–278 (LFHPEVYILILPGFGII), and 290–310 (IFGVKGMISAMSAIGFLGFLV). His264 provides a ligand contact to Cu cation. Residues 264 to 268 (HPEVY) constitute a cross-link (1'-histidyl-3'-tyrosine (His-Tyr)). Tyr268 lines the O2 pocket. Residues His314 and His315 each contribute to the Cu cation site. The next 2 helical transmembrane spans lie at 335–355 (IIAIPTGIKIFSWLATLWGGV) and 362–382 (MLFVIGFLVLFTIGGLTGVVL). Positions 392 and 393 each coordinate Mg(2+). The next 5 helical transmembrane spans lie at 396–416 (YVVAHFHYVLSMGAIFAIFAG), 444–464 (FWTMFIGVNVTFFPMHFLGLA), 483–503 (IASYGSLITAFGLLFFFVNIF), 555–575 (IFFYLIVVAVFIGWVMGRILW), and 604–624 (GTVIEIVWTLIPTVILYLIAI). Heme a3 is bound at residue His400. Residue His402 participates in Fe(II)-heme a binding. The interval 492 to 773 (AFGLLFFFVN…VQEYLGRLYK (282 aa)) is COX2. Cu cation contacts are provided by His709, Cys744, Cys748, and His752.

This sequence in the N-terminal section; belongs to the heme-copper respiratory oxidase family. In the C-terminal section; belongs to the cytochrome c oxidase subunit 2 family. Component of the cytochrome c oxidase (complex IV, CIV), a multisubunit enzyme composed of a catalytic core of 3 subunits and several supernumerary subunits. The complex exists as a monomer or a dimer and forms supercomplexes (SCs) in the inner mitochondrial membrane with ubiquinol-cytochrome c oxidoreductase (cytochrome b-c1 complex, complex III, CIII). Requires heme as cofactor. Cu cation is required as a cofactor.

The protein localises to the mitochondrion inner membrane. The catalysed reaction is 4 Fe(II)-[cytochrome c] + O2 + 8 H(+)(in) = 4 Fe(III)-[cytochrome c] + 2 H2O + 4 H(+)(out). The protein operates within energy metabolism; oxidative phosphorylation. In terms of biological role, component of the cytochrome c oxidase, the last enzyme in the mitochondrial electron transport chain which drives oxidative phosphorylation. The respiratory chain contains 3 multisubunit complexes succinate dehydrogenase (complex II, CII), ubiquinol-cytochrome c oxidoreductase (cytochrome b-c1 complex, complex III, CIII) and cytochrome c oxidase (complex IV, CIV), that cooperate to transfer electrons derived from NADH and succinate to molecular oxygen, creating an electrochemical gradient over the inner membrane that drives transmembrane transport and the ATP synthase. Cytochrome c oxidase is the component of the respiratory chain that catalyzes the reduction of oxygen to water. Electrons originating from reduced cytochrome c in the intermembrane space (IMS) are transferred via the dinuclear copper A center (CU(A)) of subunit 2 and heme A of subunit 1 to the active site in subunit 1, a binuclear center (BNC) formed by heme A3 and copper B (CU(B)). The BNC reduces molecular oxygen to 2 water molecules using 4 electrons from cytochrome c in the IMS and 4 protons from the mitochondrial matrix. The chain is Cytochrome c oxidase subunit 1+2 (cox1/2) from Dictyostelium citrinum (Slime mold).